The sequence spans 512 residues: Glycerol kinase 1 (512 aa).

Position 18 (Thr-18) interacts with ADP. The ATP site is built by Thr-18, Thr-19, and Ser-20. Sn-glycerol 3-phosphate is bound at residue Thr-18. Residue Arg-22 coordinates ADP. Sn-glycerol 3-phosphate is bound by residues Arg-88, Glu-89, Tyr-140, and Asp-255. Arg-88, Glu-89, Tyr-140, Asp-255, and Gln-256 together coordinate glycerol. Thr-277 and Gly-321 together coordinate ADP. ATP-binding residues include Thr-277, Gly-321, Gln-325, and Gly-422. Residues Gly-422 and Asn-426 each contribute to the ADP site.

The protein belongs to the FGGY kinase family.

It catalyses the reaction glycerol + ATP = sn-glycerol 3-phosphate + ADP + H(+). Its pathway is polyol metabolism; glycerol degradation via glycerol kinase pathway; sn-glycerol 3-phosphate from glycerol: step 1/1. Its activity is regulated as follows. Inhibited by fructose 1,6-bisphosphate (FBP). Key enzyme in the regulation of glycerol uptake and metabolism. Catalyzes the phosphorylation of glycerol to yield sn-glycerol 3-phosphate. This Streptomyces avermitilis (strain ATCC 31267 / DSM 46492 / JCM 5070 / NBRC 14893 / NCIMB 12804 / NRRL 8165 / MA-4680) protein is Glycerol kinase 1.